The sequence spans 165 residues: Lipoprotein signal peptidase (165 aa).

Transmembrane regions (helical) follow at residues 9–29 (SFLW…YFVV), 65–85 (WQKY…CYFL), and 100–120 (ALII…GFVV). Residues Asp121 and Asp139 contribute to the active site. The helical transmembrane segment at 134–154 (VFNVADIAISLGAGLMILDAF) threads the bilayer.

This sequence belongs to the peptidase A8 family.

The protein localises to the cell inner membrane. It catalyses the reaction Release of signal peptides from bacterial membrane prolipoproteins. Hydrolyzes -Xaa-Yaa-Zaa-|-(S,diacylglyceryl)Cys-, in which Xaa is hydrophobic (preferably Leu), and Yaa (Ala or Ser) and Zaa (Gly or Ala) have small, neutral side chains.. It participates in protein modification; lipoprotein biosynthesis (signal peptide cleavage). In terms of biological role, this protein specifically catalyzes the removal of signal peptides from prolipoproteins. The polypeptide is Lipoprotein signal peptidase (Pasteurella multocida (strain Pm70)).